A 500-amino-acid polypeptide reads, in one-letter code: Oogenesin-3 (500 aa).

One copy of the LRR 1; degenerate repeat lies at 116-143; it reads RCKLRVLKWRDEQHDFCGIWPGSHEAED. The stretch at 198–222 is one LRR 2; degenerate repeat; the sequence is HLLCRKLVIETLTKDTVIEIFKIVN. An LRR 3; degenerate repeat occupies 223-248; it reads ADCIQELELYSLCLEDLAFLNPYLRQ. The stretch at 249–285 is one LRR 4; degenerate repeat; that stretch reads MDNLLELTLDHVTDSLSMGDSEMCEEEMITLVSQLPT. 5 LRR repeats span residues 286 to 311, 312 to 343, 344 to 367, 368 to 395, and 396 to 420; these read FPCL…LRCL, KKPL…FELK, CLYL…LESV, RHTL…ALSQ, and CSHL…LLQH.

This sequence belongs to the PRAME family. Expressed in ovary, specifically in oocytes. Detected in follicles with two layers of granulosa cells, and are present in early as well as large antral follicles.

In Mus musculus (Mouse), this protein is Oogenesin-3.